A 196-amino-acid chain; its full sequence is ATP-dependent Clp protease proteolytic subunit (196 aa).

The Nucleophile role is filled by Ser98. His123 is an active-site residue.

Belongs to the peptidase S14 family. In terms of assembly, fourteen ClpP subunits assemble into 2 heptameric rings which stack back to back to give a disk-like structure with a central cavity, resembling the structure of eukaryotic proteasomes.

It is found in the cytoplasm. The catalysed reaction is Hydrolysis of proteins to small peptides in the presence of ATP and magnesium. alpha-casein is the usual test substrate. In the absence of ATP, only oligopeptides shorter than five residues are hydrolyzed (such as succinyl-Leu-Tyr-|-NHMec, and Leu-Tyr-Leu-|-Tyr-Trp, in which cleavage of the -Tyr-|-Leu- and -Tyr-|-Trp bonds also occurs).. Cleaves peptides in various proteins in a process that requires ATP hydrolysis. Has a chymotrypsin-like activity. Plays a major role in the degradation of misfolded proteins. The sequence is that of ATP-dependent Clp protease proteolytic subunit from Geobacillus thermodenitrificans (strain NG80-2).